The following is a 604-amino-acid chain: Elongation factor 4 (604 aa).

The region spanning 8-190 is the tr-type G domain; it reads DKIRNFSIIA…AIVNRLPPPR (183 aa). GTP contacts are provided by residues 20–25 and 137–140; these read DHGKST and NKID.

The protein belongs to the TRAFAC class translation factor GTPase superfamily. Classic translation factor GTPase family. LepA subfamily.

The protein resides in the cell inner membrane. The catalysed reaction is GTP + H2O = GDP + phosphate + H(+). Required for accurate and efficient protein synthesis under certain stress conditions. May act as a fidelity factor of the translation reaction, by catalyzing a one-codon backward translocation of tRNAs on improperly translocated ribosomes. Back-translocation proceeds from a post-translocation (POST) complex to a pre-translocation (PRE) complex, thus giving elongation factor G a second chance to translocate the tRNAs correctly. Binds to ribosomes in a GTP-dependent manner. The protein is Elongation factor 4 of Hyphomonas neptunium (strain ATCC 15444).